The sequence spans 136 residues: Holo-[acyl-carrier-protein] synthase (136 aa).

Mg(2+)-binding residues include Asp-8 and Glu-57.

This sequence belongs to the P-Pant transferase superfamily. AcpS family. Mg(2+) serves as cofactor.

It is found in the cytoplasm. The enzyme catalyses apo-[ACP] + CoA = holo-[ACP] + adenosine 3',5'-bisphosphate + H(+). Transfers the 4'-phosphopantetheine moiety from coenzyme A to a Ser of acyl-carrier-protein. This chain is Holo-[acyl-carrier-protein] synthase, found in Methylobacterium radiotolerans (strain ATCC 27329 / DSM 1819 / JCM 2831 / NBRC 15690 / NCIMB 10815 / 0-1).